Reading from the N-terminus, the 186-residue chain is Putative CTD phosphatase-like protein 355R (186 aa).

An FCP1 homology domain is found at E2–L182.

Belongs to the IIV-6 355R family.

Its function is as follows. May function as a phosphatase. The polypeptide is Putative CTD phosphatase-like protein 355R (Aedes vexans (Inland floodwater mosquito)).